A 627-amino-acid polypeptide reads, in one-letter code: Carene synthase 3, chloroplastic (627 aa).

The transit peptide at M1–L36 directs the protein to the chloroplast. Mg(2+)-binding residues include D378, D382, and D530. The DDXXD motif motif lies at D378–D382.

This sequence belongs to the terpene synthase family. Tpsd subfamily. It depends on Mg(2+) as a cofactor. The cofactor is Mn(2+).

Its subcellular location is the plastid. It localises to the chloroplast. The catalysed reaction is (2E)-geranyl diphosphate = (+)-car-3-ene + diphosphate. It functions in the pathway terpene metabolism; oleoresin biosynthesis. Terpene synthase (TPS) involved in defensive oleoresin formation in conifers in response to insect attack or other injury. This chain is Carene synthase 3, chloroplastic (TPS-3car3), found in Picea sitchensis (Sitka spruce).